The following is a 264-amino-acid chain: Ribonuclease HII (264 aa).

The RNase H type-2 domain maps to 69-263; sequence KVVCGIDEVG…EENAKTITKP (195 aa). Residues Asp75, Glu76, and Asp166 each contribute to the a divalent metal cation site.

Belongs to the RNase HII family. Requires Mn(2+) as cofactor. Mg(2+) is required as a cofactor.

The protein resides in the cytoplasm. It carries out the reaction Endonucleolytic cleavage to 5'-phosphomonoester.. Endonuclease that specifically degrades the RNA of RNA-DNA hybrids. This is Ribonuclease HII from Macrococcus caseolyticus (strain JCSC5402) (Macrococcoides caseolyticum).